Reading from the N-terminus, the 787-residue chain is Aminodeoxychorismate synthase (787 aa).

The Glutamine amidotransferase type-1 domain maps to 16 to 233 (HVLFIDSYDS…LKLSFINNVK (218 aa)). Active-site residues include cysteine 112, histidine 207, and glutamate 209. The interval 304–787 (MSSSVISENT…KLESNLQIFM (484 aa)) is PABB component.

The protein in the C-terminal section; belongs to the anthranilate synthase component I family.

The protein resides in the cytoplasm. It carries out the reaction chorismate + L-glutamine = 4-amino-4-deoxychorismate + L-glutamate. Its pathway is cofactor biosynthesis; tetrahydrofolate biosynthesis; 4-aminobenzoate from chorismate: step 1/2. Functionally, catalyzes the biosynthesis of 4-amino-4-deoxychorismate (ADC) from chorismate and glutamine. Required for the synthesis of 4-aminobenzoate (PABA), an important component in tetrahydrofolate biosynthesis. This is Aminodeoxychorismate synthase (ABZ1) from Saccharomyces cerevisiae (strain ATCC 204508 / S288c) (Baker's yeast).